The primary structure comprises 782 residues: E3 ubiquitin-protein ligase SopA (782 aa).

Residues 136–171 (GVSVSANNRPTVSEGRTPPVSPSLSLQATSSPSSPA) are disordered. The segment covering 157 to 171 (PSLSLQATSSPSSPA) has biased composition (low complexity). Catalysis depends on Cys-753, which acts as the Glycyl thioester intermediate.

It belongs to the SopA E3 ligase family. Post-translationally, ubiquitinated in the presence of host E1 ubiquitin-activating enzyme, E2 ubiquitin-conjugating enzyme and ubiquitin.

It localises to the secreted. The protein localises to the host cell. The catalysed reaction is S-ubiquitinyl-[E2 ubiquitin-conjugating enzyme]-L-cysteine + [acceptor protein]-L-lysine = [E2 ubiquitin-conjugating enzyme]-L-cysteine + N(6)-ubiquitinyl-[acceptor protein]-L-lysine.. Its function is as follows. Effector proteins function to alter host cell physiology and promote bacterial survival in host tissues. This protein is an E3 ubiquitin ligase that interferes with host's ubiquitination pathway. For instance, prevents host innate immune response by ubiquitinating and thus sending to degradation host E3 ubiquitin ligases TRIM56 and TRIM65. The chain is E3 ubiquitin-protein ligase SopA (sopA) from Salmonella typhimurium (strain D23580).